Consider the following 1005-residue polypeptide: Negative regulator of pleiotropic drug resistance STB5 (1005 aa).

The segment at 1 to 28 is disordered; it reads MSGPDKGSDSGQTANDPKQKKARNGQME. A DNA-binding region (zn(2)-C6 fungal-type) is located at residues 32 to 59; the sequence is CARCRKLKKKCPRQLPECSNCLKAREPC. Disordered regions lie at residues 129–151, 666–693, and 763–831; these read GGEQQYNNGPPISGIDGNDSINR, KGKSRSSKRFEKSKESDSDRGVTEEDVK, and TKPT…SSLR. Over residues 673-693 the composition is skewed to basic and acidic residues; sequence KRFEKSKESDSDRGVTEEDVK. Positions 763–773 are enriched in polar residues; sequence TKPTANIMNDQ. A compositionally biased stretch (basic and acidic residues) spans 792-801; that stretch reads EGPKSLKEGN.

It localises to the nucleus. Transcription factor that negatively regulates pleiotropic drug resistance genes, including the ABC transporter genes CDR1, PDH1, and YOR1. In Candida glabrata (strain ATCC 2001 / BCRC 20586 / JCM 3761 / NBRC 0622 / NRRL Y-65 / CBS 138) (Yeast), this protein is Negative regulator of pleiotropic drug resistance STB5.